An 89-amino-acid chain; its full sequence is Small ribosomal subunit protein uS17A (89 aa).

It belongs to the universal ribosomal protein uS17 family. As to quaternary structure, part of the 30S ribosomal subunit.

In terms of biological role, one of the primary rRNA binding proteins, it binds specifically to the 5'-end of 16S ribosomal RNA. This chain is Small ribosomal subunit protein uS17A, found in Bacteroides thetaiotaomicron (strain ATCC 29148 / DSM 2079 / JCM 5827 / CCUG 10774 / NCTC 10582 / VPI-5482 / E50).